Consider the following 314-residue polypeptide: Protein phosphatase PTC7 homolog fig (314 aa).

The PPM-type phosphatase domain occupies Pro43–Val309. Positions 87, 88, and 232 each coordinate Mn(2+).

It belongs to the PP2C family. The cofactor is Mg(2+). It depends on Mn(2+) as a cofactor.

The enzyme catalyses O-phospho-L-seryl-[protein] + H2O = L-seryl-[protein] + phosphate. The catalysed reaction is O-phospho-L-threonyl-[protein] + H2O = L-threonyl-[protein] + phosphate. The chain is Protein phosphatase PTC7 homolog fig from Drosophila simulans (Fruit fly).